The chain runs to 720 residues: Polyribonucleotide nucleotidyltransferase (720 aa).

Mg(2+) is bound by residues aspartate 484 and aspartate 490. One can recognise a KH domain in the interval 551-610 (PRMYKISIDPSKIGSVIGSGGKTIRSIIEQTNTTVDIENDGTVVIGATDEASAQKAIKII). The region spanning 620 to 688 (GSVYTGKVTR…SQGRINLSRR (69 aa)) is the S1 motif domain. The disordered stretch occupies residues 697-720 (PISRNRDSQPRRSGPFRPQDRSNS).

Belongs to the polyribonucleotide nucleotidyltransferase family. Mg(2+) serves as cofactor.

The protein localises to the cytoplasm. The enzyme catalyses RNA(n+1) + phosphate = RNA(n) + a ribonucleoside 5'-diphosphate. Its function is as follows. Involved in mRNA degradation. Catalyzes the phosphorolysis of single-stranded polyribonucleotides processively in the 3'- to 5'-direction. This Dehalococcoides mccartyi (strain ATCC BAA-2266 / KCTC 15142 / 195) (Dehalococcoides ethenogenes (strain 195)) protein is Polyribonucleotide nucleotidyltransferase.